A 968-amino-acid polypeptide reads, in one-letter code: RNA polymerase-associated protein RapA (968 aa).

Residues 163–332 form the Helicase ATP-binding domain; it reads EVGRRYAPRV…FARLRLLDPD (170 aa). ATP is bound at residue 176-183; it reads DEVGLGKT. The short motif at 278 to 281 is the DEAH box element; sequence DEAH. The 153-residue stretch at 491–643 folds into the Helicase C-terminal domain; it reads RVDWLIAFLK…ELTCPSGHVL (153 aa).

Belongs to the SNF2/RAD54 helicase family. RapA subfamily. As to quaternary structure, interacts with the RNAP. Has a higher affinity for the core RNAP than for the holoenzyme. Its ATPase activity is stimulated by binding to RNAP.

In terms of biological role, transcription regulator that activates transcription by stimulating RNA polymerase (RNAP) recycling in case of stress conditions such as supercoiled DNA or high salt concentrations. Probably acts by releasing the RNAP, when it is trapped or immobilized on tightly supercoiled DNA. Does not activate transcription on linear DNA. Probably not involved in DNA repair. This Shewanella sp. (strain W3-18-1) protein is RNA polymerase-associated protein RapA.